The following is a 119-amino-acid chain: Protein phosphatase EYA4 (119 aa).

It belongs to the HAD-like hydrolase superfamily. EYA family. Mg(2+) serves as cofactor.

It is found in the cytoplasm. It localises to the nucleus. The catalysed reaction is O-phospho-L-tyrosyl-[protein] + H2O = L-tyrosyl-[protein] + phosphate. Tyrosine phosphatase that specifically dephosphorylates 'Tyr-142' of histone H2AX (H2AXY142ph). 'Tyr-142' phosphorylation of histone H2AX plays a central role in DNA repair and acts as a mark that distinguishes between apoptotic and repair responses to genotoxic stress. Promotes efficient DNA repair by dephosphorylating H2AX, promoting the recruitment of DNA repair complexes containing MDC1. Its function as histone phosphatase probably explains its role in transcription regulation during organogenesis. May be involved in development of the eye. The chain is Protein phosphatase EYA4 (EYA4) from Gallus gallus (Chicken).